A 278-amino-acid polypeptide reads, in one-letter code: Phosphatidylglycerol--prolipoprotein diacylglyceryl transferase (278 aa).

4 consecutive transmembrane segments (helical) span residues 17-37, 57-77, 89-109, and 119-139; these read LAVR…ILLG, ALFY…VLFY, ILAI…VAIA, and LSWL…LGAG. Arg140 contacts a 1,2-diacyl-sn-glycero-3-phospho-(1'-sn-glycerol). A run of 3 helical transmembrane segments spans residues 174–194, 200–220, and 233–253; these read QLYE…LYSA, GAVT…CEFF, and LGIS…IALL.

This sequence belongs to the Lgt family.

It is found in the cell inner membrane. It catalyses the reaction L-cysteinyl-[prolipoprotein] + a 1,2-diacyl-sn-glycero-3-phospho-(1'-sn-glycerol) = an S-1,2-diacyl-sn-glyceryl-L-cysteinyl-[prolipoprotein] + sn-glycerol 1-phosphate + H(+). The protein operates within protein modification; lipoprotein biosynthesis (diacylglyceryl transfer). In terms of biological role, catalyzes the transfer of the diacylglyceryl group from phosphatidylglycerol to the sulfhydryl group of the N-terminal cysteine of a prolipoprotein, the first step in the formation of mature lipoproteins. This Nitrosomonas europaea (strain ATCC 19718 / CIP 103999 / KCTC 2705 / NBRC 14298) protein is Phosphatidylglycerol--prolipoprotein diacylglyceryl transferase.